Here is a 463-residue protein sequence, read N- to C-terminus: MLSENVKKISMVEKVGYASGDFACNLIYATVSTYLLFFYTDVFGLSAAAAGTMFLVVRIIDALADPFIGTIVDRTNSRFGRFRPYLLFGAFPFVILAILCFTTPDFSDMGKLIYAYITYVGLSLTYTTINVPYGALTSAMTRNNQEVVSITSVRMLFANLGGLVVAFFVPLLAAYLSDTSGNESLGWQLTMGILGMIGGCLLIFCFKSTKERVTLQKSEEKIKFTDIFEQFRVNRPLVVLSIFFIIIFGVNSISNSVGIYYVTYNLEREDLVKWYGLIGSLPALVILPFIPRLHQFLGKKKLLNYALLLNIIGLLALLFVPPSNVYLILVCRLIAAAGSLTAGGYMWALIPETIEYGEYRTGKRMGGLIYAIIGFFFKFGMALGGVVPGLVLDKFGYVANQAQTPAALMGILITTTIIPVFLLVLALIDINFYNLDEKKYKNMVRELENRDKVYLDHIDDFKA.

Helical transmembrane passes span 21 to 40, 50 to 72, 84 to 104, 112 to 132, 156 to 176, 186 to 206, 237 to 257, 271 to 291, 311 to 331, 334 to 354, 367 to 387, and 408 to 428; these read DFACNLIYATVSTYLLFFYT, AGTMFLVVRIIDALADPFIGTIV, PYLLFGAFPFVILAILCFTTP, LIYAYITYVGLSLTYTTINVP, LFANLGGLVVAFFVPLLAAYL, GWQLTMGILGMIGGCLLIFCF, LVVLSIFFIIIFGVNSISNSV, LVKWYGLIGSLPALVILPFIP, IIGLLALLFVPPSNVYLILVC, IAAAGSLTAGGYMWALIPETI, GLIYAIIGFFFKFGMALGGVV, and LMGILITTTIIPVFLLVLALI.

Belongs to the sodium:galactoside symporter (TC 2.A.2) family.

Its subcellular location is the cell membrane. This is an uncharacterized protein from Bacillus subtilis (strain 168).